Consider the following 377-residue polypeptide: Leukocyte elastase inhibitor (377 aa).

Met-1 bears the N-acetylmethionine mark. An N6-acetyllysine modification is found at Lys-136. Ser-298 is subject to Phosphoserine. A CARD-binding motif (CBM) region spans residues 349-377 (EFVADHPFIFFIRHKPSSNILFLGRLSSP).

It belongs to the serpin family. Ov-serpin subfamily. In terms of assembly, monomer. Interacts (via C-terminus) with CASP1; CASP4 (via CARD domain) and CASP5; these interactions regulate the activity of inflammatory caspases. Interacts with PRTN3. Interacts with GZMH.

It is found in the secreted. The protein localises to the cytoplasm. It localises to the cytolytic granule. The protein resides in the early endosome. In terms of biological role, neutrophil serine protease inhibitor that plays an essential role in the regulation of the innate immune response, inflammation and cellular homeostasis. Acts primarily to protect the cell from proteases released in the cytoplasm during stress or infection. These proteases are important in killing microbes but when released from granules, these potent enzymes also destroy host proteins and contribute to mortality. Regulates the activity of the neutrophil proteases elastase, cathepsin G, proteinase-3, chymase, chymotrypsin, and kallikrein-3. Also acts as a potent intracellular inhibitor of GZMH by directly blocking its proteolytic activity. During inflammation, limits the activity of inflammatory caspases CASP1, CASP4 and CASP5 by suppressing their caspase-recruitment domain (CARD) oligomerization and enzymatic activation. When secreted, promotes the proliferation of beta-cells via its protease inhibitory function. The polypeptide is Leukocyte elastase inhibitor (SERPINB1) (Bos taurus (Bovine)).